Consider the following 274-residue polypeptide: Large ribosomal subunit protein uL2 (274 aa).

Positions Val223–Lys274 are disordered. Residues Phe256–Lys274 are compositionally biased toward basic residues.

It belongs to the universal ribosomal protein uL2 family. As to quaternary structure, part of the 50S ribosomal subunit. Forms a bridge to the 30S subunit in the 70S ribosome.

In terms of biological role, one of the primary rRNA binding proteins. Required for association of the 30S and 50S subunits to form the 70S ribosome, for tRNA binding and peptide bond formation. It has been suggested to have peptidyltransferase activity; this is somewhat controversial. Makes several contacts with the 16S rRNA in the 70S ribosome. This chain is Large ribosomal subunit protein uL2, found in Vibrio atlanticus (strain LGP32) (Vibrio splendidus (strain Mel32)).